Consider the following 191-residue polypeptide: Apoptosis regulator BHRF1 (191 aa).

An interaction with host VRK2 region spans residues 1-18 (MAYSTREILLALCIRDSR). Residue Asn-22 is glycosylated (N-linked (GlcNAc...) asparagine; by host). The BH1 motif lies at 89-109 (EIFHRGDPSLGRALAWMAWCM). The interval 89-142 (EIFHRGDPSLGRALAWMAWCMHACRTLCCNQSTPYYVVDLSVRGMLEASEGLDG) is interaction with host VRK2. A glycan (N-linked (GlcNAc...) asparagine; by host) is linked at Asn-118. The BH2 motif lies at 142–157 (GWIHQQGGWSTLIEDN). Residues 166–186 (WTLFLAGLTLSLLVICSYLFI) traverse the membrane as a helical segment.

The protein belongs to the Bcl-2 family. Interacts with isoform 1 of host VRK2; this interaction is involved in protecting cells from apoptosis. Interacts with host PRA1; this interaction seems to modulate BHRF1 anti-apoptotic activity. Interacts with host BCL2L11. Interacts with host BAD and BBC3. Interacts with BALF1; BALF1 acting as a negative regulator of the survival function of BHRF1. Interacts with host BECN1.

It is found in the host membrane. The protein localises to the host mitochondrion. In terms of biological role, prevents premature death of the host cell during virus production, which would otherwise reduce the amount of progeny virus. Acts as a host B-cell leukemia/lymphoma 2 (Bcl-2) homolog, and interacts with pro-apoptotic proteins to prevent mitochondria permeabilization, release of cytochrome c and subsequent apoptosis of the host cell. In addition, plays a role in the inhibiton of host BECN1-mediated starvation-induced autophagy without affecting basal levels of autophagy. This is Apoptosis regulator BHRF1 from Homo sapiens (Human).